The following is a 299-amino-acid chain: RGG repeats nuclear RNA binding protein A (299 aa).

Positions 1 to 21 (RGGGRGGPRGGGRGRGPGRGR) are enriched in gly residues. 2 disordered regions span residues 1 to 173 (RGGG…KEMT) and 232 to 299 (EAVE…LVAK). Positions 45-60 (RVQEDGESGKLSERRG) are enriched in basic and acidic residues. The span at 61 to 78 (GYGGPRGGFHGGRRGGFN) shows a compositional bias: gly residues. Composition is skewed to basic and acidic residues over residues 86–98 (EGER…DRRS) and 134–146 (DGEK…KEAG). Residues 88–98 (ERPRRVFDRRS) carry the Arginine-rich RNA-binding motif E-R-P-R-R-X-[F/Y]-[E/D]-R-R-S motif. Positions 267 to 278 (RGRGGFGGGVGG) are enriched in gly residues.

The protein belongs to the SERBP1-HABP4 family. In terms of tissue distribution, expressed in seedlings but not in roots.

It localises to the nucleus. Its subcellular location is the cytoplasm. The protein localises to the perinuclear region. Ribosome-binding protein that acts as a regulator of mRNA translation by promoting ribosome inactivation. Binds RNA. The protein is RGG repeats nuclear RNA binding protein A of Nicotiana tabacum (Common tobacco).